The chain runs to 122 residues: Large ribosomal subunit protein uL14c (122 aa).

Belongs to the universal ribosomal protein uL14 family. As to quaternary structure, part of the 50S ribosomal subunit.

Its subcellular location is the plastid. It is found in the chloroplast. Its function is as follows. Binds to 23S rRNA. The sequence is that of Large ribosomal subunit protein uL14c from Phalaenopsis aphrodite subsp. formosana (Moth orchid).